A 331-amino-acid chain; its full sequence is Anthranilate phosphoribosyltransferase (331 aa).

5-phospho-alpha-D-ribose 1-diphosphate is bound by residues Gly79, 82–83 (GD), Ser87, 89–92 (NIST), 107–115 (KHCNSSISG), and Ser119. An anthranilate-binding site is contributed by Gly79. Ser91 provides a ligand contact to Mg(2+). Anthranilate is bound at residue Asn110. Arg165 contributes to the anthranilate binding site. Mg(2+) contacts are provided by Asp223 and Glu224.

Belongs to the anthranilate phosphoribosyltransferase family. As to quaternary structure, homodimer. Mg(2+) serves as cofactor.

The catalysed reaction is N-(5-phospho-beta-D-ribosyl)anthranilate + diphosphate = 5-phospho-alpha-D-ribose 1-diphosphate + anthranilate. It participates in amino-acid biosynthesis; L-tryptophan biosynthesis; L-tryptophan from chorismate: step 2/5. In terms of biological role, catalyzes the transfer of the phosphoribosyl group of 5-phosphorylribose-1-pyrophosphate (PRPP) to anthranilate to yield N-(5'-phosphoribosyl)-anthranilate (PRA). This Buchnera aphidicola subsp. Melaphis rhois protein is Anthranilate phosphoribosyltransferase.